Here is a 1108-residue protein sequence, read N- to C-terminus: Multidrug resistance regulator 1 (1108 aa).

Positions Met-1–Pro-19 are enriched in polar residues. The disordered stretch occupies residues Met-1–Val-27. The segment at residues Cys-31–Cys-59 is a DNA-binding region (zn(2)-C6 fungal-type). Residues Pro-68–Pro-83 are compositionally biased toward polar residues. Disordered regions lie at residues Pro-68–Glu-138, Asp-968–Arg-990, and Ala-1021–Asn-1064. 2 stretches are compositionally biased toward basic and acidic residues: residues Arg-86–Arg-104 and Asn-114–Pro-123. A compositionally biased stretch (polar residues) spans Asp-124–Glu-138. Residues Ala-134–Asn-165 adopt a coiled-coil conformation. Low complexity-rich tracts occupy residues Thr-970–Thr-980 and Gln-1023–Ser-1041.

Its subcellular location is the nucleus. Functionally, transcription factor that acts as the central regulator of the MDR1 efflux pump. Other target genes include those encoding oxidoreductases, whose up-regulation in fluconazole-resistant isolates may help to prevent cell damage resulting from the generation of toxic molecules in the presence of fluconazole and thereby contribute to drug resistance. In Candida albicans (strain SC5314 / ATCC MYA-2876) (Yeast), this protein is Multidrug resistance regulator 1.